A 327-amino-acid polypeptide reads, in one-letter code: Phenylalanine--tRNA ligase alpha subunit (327 aa).

Mg(2+) is bound at residue Glu252.

This sequence belongs to the class-II aminoacyl-tRNA synthetase family. Phe-tRNA synthetase alpha subunit type 1 subfamily. Tetramer of two alpha and two beta subunits. The cofactor is Mg(2+).

It localises to the cytoplasm. It catalyses the reaction tRNA(Phe) + L-phenylalanine + ATP = L-phenylalanyl-tRNA(Phe) + AMP + diphosphate + H(+). The chain is Phenylalanine--tRNA ligase alpha subunit from Shigella sonnei (strain Ss046).